Here is a 277-residue protein sequence, read N- to C-terminus: Carbonyl reductase [NADPH] 1 (277 aa).

Residue S2 is modified to N-acetylserine. A phosphoserine mark is found at S2 and S30. Residues 10–34, 63–64, and N90 each bind NADP(+); these read VTGA…GDVV and DI. Glutathione contacts are provided by residues 95 to 97 and Q106; that span reads FKV. S140 contributes to the substrate binding site. 193–194 provides a ligand contact to glutathione; that stretch reads AY. Y194 serves as the catalytic Proton acceptor. NADP(+) is bound by residues 194–198 and 231–233; these read YGVTK and VRT. N6-1-carboxyethyl lysine is present on K239. Residues 258-277 form a disordered region; sequence PPDAEGPHGQFVQDKKVEPW.

This sequence belongs to the short-chain dehydrogenases/reductases (SDR) family. Monomer.

The protein resides in the cytoplasm. The enzyme catalyses a secondary alcohol + NADP(+) = a ketone + NADPH + H(+). It carries out the reaction prostaglandin F2alpha + NADP(+) = prostaglandin E2 + NADPH + H(+). The catalysed reaction is prostaglandin E1 + NADP(+) = 15-oxoprostaglandin E1 + NADPH + H(+). It catalyses the reaction menadione + NADPH + H(+) = menadiol + NADP(+). The enzyme catalyses prostaglandin D2 + NADP(+) = 15-oxoprostaglandin D2 + NADPH + H(+). It carries out the reaction prostaglandin E2 + NADP(+) = 15-oxoprostaglandin E2 + NADPH + H(+). The catalysed reaction is prostaglandin F2alpha + NADP(+) = 15-oxoprostaglandin F2alpha + NADPH + H(+). It catalyses the reaction daunorubicin + NADPH + H(+) = 13-dihydrodaunorubicin + NADP(+). The enzyme catalyses S-nitrosoglutathione + NADPH + H(+) = S-(hydroxysulfenamide)glutathione + NADP(+). It carries out the reaction corticosterone + NADPH + H(+) = 20beta-dihydrocorticosterone + NADP(+). The catalysed reaction is a primary alcohol + NADP(+) = an aldehyde + NADPH + H(+). It catalyses the reaction cortisol + NADPH + H(+) = 20beta-dihydrocortisol + NADP(+). In terms of biological role, NADPH-dependent reductase with broad substrate specificity. Catalyzes the reduction of a wide variety of carbonyl compounds including quinones, prostaglandins, menadione, plus various xenobiotics. Catalyzes the reduction of the antitumor anthracyclines doxorubicin and daunorubicin to the cardiotoxic compounds doxorubicinol and daunorubicinol. Can convert prostaglandin E to prostaglandin F2-alpha. Can bind glutathione, which explains its higher affinity for glutathione-conjugated substrates. Catalyzes the reduction of S-nitrosoglutathione. In addition, participates in the glucocorticoid metabolism by catalyzing the NADPH-dependent cortisol/corticosterone into 20beta-dihydrocortisol (20b-DHF) or 20beta-corticosterone (20b-DHB), which are weak agonists of NR3C1 and NR3C2 in adipose tissue. This Mus musculus (Mouse) protein is Carbonyl reductase [NADPH] 1.